The chain runs to 1308 residues: Tau-tubulin kinase 1 (1308 aa).

The 264-residue stretch at 34 to 297 folds into the Protein kinase domain; that stretch reads WKVLKKIGGG…LIMSVFENSM (264 aa). ATP is bound by residues 40-48 and K63; that span reads IGGGGFGEI. D154 functions as the Proton acceptor in the catalytic mechanism. 6 disordered regions span residues 364-397, 418-448, 474-671, 720-899, 985-1085, and 1097-1308; these read LSDQ…GPEA, PCVE…PVRS, ERRS…APPF, QVPL…AGGG, EMES…LARL, and RLAS…PGAR. S441 is subject to Phosphoserine. Residues 485-496 are compositionally biased toward polar residues; sequence PSRQACSSQPAQ. S541 carries the post-translational modification Phosphoserine. 2 stretches are compositionally biased toward basic and acidic residues: residues 541–555 and 574–589; these read SKEW…ELKD and ELRP…RRLG. The segment covering 638 to 647 has biased composition (low complexity); the sequence is SPSHSPLHSG. The span at 735 to 769 shows a compositional bias: acidic residues; the sequence is GEEEEEEEEEEEEEEEEEEEEEEEEEEEEEEEEEA. Residues 786–795 show a composition bias toward basic and acidic residues; the sequence is GSERSTERSQ. Composition is skewed to polar residues over residues 868-885 and 1020-1035; these read PTGS…SSIL and ASQQ…TISP. The span at 1097 to 1107 shows a compositional bias: low complexity; sequence RLASGASSSSS.

It belongs to the protein kinase superfamily. CK1 Ser/Thr protein kinase family. Mg(2+) is required as a cofactor. It depends on Mn(2+) as a cofactor. Expressed in the brain. Strong expression in the cortical layers, the CA1 layers of the hippocampus and the granular layer of the cerebellum. Also expressed in the large cortical pyramidal cells in the temporal cortex, the CA1 pyramidal neurons and the cerebellum granular neurons.

The protein resides in the cytoplasm. The catalysed reaction is L-seryl-[protein] + ATP = O-phospho-L-seryl-[protein] + ADP + H(+). It catalyses the reaction L-threonyl-[protein] + ATP = O-phospho-L-threonyl-[protein] + ADP + H(+). Functionally, serine/threonine kinase which is able to phosphorylate TAU on serine, threonine and tyrosine residues. Induces aggregation of TAU. This chain is Tau-tubulin kinase 1 (Ttbk1), found in Mus musculus (Mouse).